The sequence spans 28 residues: Potassium channel toxin alpha-KTx 9.5 (28 aa).

Intrachain disulfides connect Cys-3-Cys-19, Cys-6-Cys-24, and Cys-10-Cys-26. Position 28 is a valine amide (Val-28).

As to expression, expressed by the venom gland.

The protein localises to the secreted. Its function is as follows. Blocks voltage-gated potassium channels Kv1.1/KCNA1 (IC(50)=145 nM), Kv1.2/KCNA2 (IC(50)=2.5 nM), and Kv1.3/KCNA3 (IC(50)=15). Also inhibits calcium-activated potassium channels (KCa/KCNN). The polypeptide is Potassium channel toxin alpha-KTx 9.5 (Buthus occitanus tunetanus (Common European scorpion)).